A 146-amino-acid polypeptide reads, in one-letter code: Hut operon positive regulatory protein (146 aa).

Belongs to the HutP family. As to quaternary structure, homohexamer.

Its function is as follows. Antiterminator that binds to cis-acting regulatory sequences on the mRNA in the presence of histidine, thereby suppressing transcription termination and activating the hut operon for histidine utilization. This Bacillus anthracis (strain CDC 684 / NRRL 3495) protein is Hut operon positive regulatory protein.